Consider the following 369-residue polypeptide: Chorismate synthase (369 aa).

Arg48 and Arg54 together coordinate NADP(+). Residues 125–127 (RSS), 238–239 (NA), Gly283, 298–302 (KPTSS), and Arg324 each bind FMN.

Belongs to the chorismate synthase family. As to quaternary structure, homotetramer. It depends on FMNH2 as a cofactor.

The catalysed reaction is 5-O-(1-carboxyvinyl)-3-phosphoshikimate = chorismate + phosphate. It functions in the pathway metabolic intermediate biosynthesis; chorismate biosynthesis; chorismate from D-erythrose 4-phosphate and phosphoenolpyruvate: step 7/7. In terms of biological role, catalyzes the anti-1,4-elimination of the C-3 phosphate and the C-6 proR hydrogen from 5-enolpyruvylshikimate-3-phosphate (EPSP) to yield chorismate, which is the branch point compound that serves as the starting substrate for the three terminal pathways of aromatic amino acid biosynthesis. This reaction introduces a second double bond into the aromatic ring system. The sequence is that of Chorismate synthase from Acidiphilium cryptum (strain JF-5).